We begin with the raw amino-acid sequence, 277 residues long: Protein PTST, chloroplastic (277 aa).

A chloroplast-targeting transit peptide spans 1–44 (MGCVPRIEFGCSSQSLTLSWNLRAWNLCRLNTISHFQKLPYPLV). Positions 95–152 (DTERSKLVKKLSEANQQNRFLKRQLKTQEHEITNIKTELALMELEVQALVKLAEEIAN) form a coiled coil.

Interacts with GBSS1.

Its subcellular location is the plastid. The protein localises to the chloroplast stroma. Functionally, involved in targeting GBSS1 to the starch granule. Was originally thought to be a carbohydrate-binding scaffold protein, but it has been shown that it is mainly found as a soluble protein and that interaction with GBSS1 is a pre-requisite for subsequent starch granule binding. Dissociation from starch as a function of pH, Mg(2+) concentration or redox state is not observed. Interacts primarily with amylopectin and is required for amylose synthesis. The protein is Protein PTST, chloroplastic of Arabidopsis thaliana (Mouse-ear cress).